The primary structure comprises 196 residues: dITP/XTP pyrophosphatase (196 aa).

10–15 (TSNKGK) provides a ligand contact to substrate. The active-site Proton acceptor is the D71. Position 71 (D71) interacts with Mg(2+). Substrate is bound by residues S72, 156–159 (FGYD), K179, and 184–185 (HR).

It belongs to the HAM1 NTPase family. As to quaternary structure, homodimer. Mg(2+) serves as cofactor.

The enzyme catalyses XTP + H2O = XMP + diphosphate + H(+). The catalysed reaction is dITP + H2O = dIMP + diphosphate + H(+). It catalyses the reaction ITP + H2O = IMP + diphosphate + H(+). Pyrophosphatase that catalyzes the hydrolysis of nucleoside triphosphates to their monophosphate derivatives, with a high preference for the non-canonical purine nucleotides XTP (xanthosine triphosphate), dITP (deoxyinosine triphosphate) and ITP. Seems to function as a house-cleaning enzyme that removes non-canonical purine nucleotides from the nucleotide pool, thus preventing their incorporation into DNA/RNA and avoiding chromosomal lesions. The chain is dITP/XTP pyrophosphatase from Haemophilus ducreyi (strain 35000HP / ATCC 700724).